Consider the following 313-residue polypeptide: Small ribosomal subunit protein uS2 (313 aa).

Over residues 228 to 256 (RQEDKAAEAQDKDAQDTEDNKGARPRGAE) the composition is skewed to basic and acidic residues. The tract at residues 228–313 (RQEDKAAEAQ…VSKAGDKPKK (86 aa)) is disordered.

This sequence belongs to the universal ribosomal protein uS2 family.

The sequence is that of Small ribosomal subunit protein uS2 from Amoebophilus asiaticus (strain 5a2).